Here is a 602-residue protein sequence, read N- to C-terminus: Non structural protein VP9' (602 aa).

The protein localises to the host cytoplasm. In Callospermophilus lateralis (Golden-mantled ground squirrel), this protein is Non structural protein VP9'.